Here is a 347-residue protein sequence, read N- to C-terminus: Dihydroorotase (347 aa).

Zn(2+) contacts are provided by histidine 13 and histidine 15. Substrate contacts are provided by residues 15-17 (HLR) and asparagine 41. Positions 99, 136, and 174 each coordinate Zn(2+). Lysine 99 carries the N6-carboxylysine modification. Histidine 136 contributes to the substrate binding site. Leucine 219 contacts substrate. Aspartate 247 is a binding site for Zn(2+). Aspartate 247 is an active-site residue. 2 residues coordinate substrate: histidine 251 and alanine 263.

This sequence belongs to the metallo-dependent hydrolases superfamily. DHOase family. Class II DHOase subfamily. In terms of assembly, homodimer. The cofactor is Zn(2+).

It catalyses the reaction (S)-dihydroorotate + H2O = N-carbamoyl-L-aspartate + H(+). The protein operates within pyrimidine metabolism; UMP biosynthesis via de novo pathway; (S)-dihydroorotate from bicarbonate: step 3/3. Its function is as follows. Catalyzes the reversible cyclization of carbamoyl aspartate to dihydroorotate. In Sinorhizobium medicae (strain WSM419) (Ensifer medicae), this protein is Dihydroorotase.